Reading from the N-terminus, the 182-residue chain is Sec-independent protein translocase protein TatB (182 aa).

A helical membrane pass occupies residues 1-21 (MFDIGFSELLLVFVIGLIVLG). 2 disordered regions span residues 88–107 (AAESMKRTYSANDPEQASDE) and 121–182 (TQHE…SDKP). Residues 168-182 (AAPVVESSPSSSDKP) are compositionally biased toward low complexity.

It belongs to the TatB family. As to quaternary structure, the Tat system comprises two distinct complexes: a TatABC complex, containing multiple copies of TatA, TatB and TatC subunits, and a separate TatA complex, containing only TatA subunits. Substrates initially bind to the TatABC complex, which probably triggers association of the separate TatA complex to form the active translocon.

It is found in the cell inner membrane. Part of the twin-arginine translocation (Tat) system that transports large folded proteins containing a characteristic twin-arginine motif in their signal peptide across membranes. Together with TatC, TatB is part of a receptor directly interacting with Tat signal peptides. TatB may form an oligomeric binding site that transiently accommodates folded Tat precursor proteins before their translocation. The chain is Sec-independent protein translocase protein TatB from Salmonella typhi.